The following is a 143-amino-acid chain: Subtelomeric hrmA-associated cluster protein cgnA (143 aa).

G-Q-I/R/S repeat units lie at residues 11–13 (GQI), 14–16 (GPI), 17–19 (GQR), 20–22 (GQS), 23–25 (GQR), 26–28 (GQS), 29–31 (GQR), 32–34 (GQS), 35–37 (GQI), 38–40 (GQS), 41–43 (GQS), 44–46 (GQS), 47–49 (GQI), 50–52 (GQI), 53–55 (GQI), 56–58 (GQI), 59–61 (GQI), 62–64 (GQI), 65–67 (GQI), 68–70 (GQI), 71–73 (GQI), 74–76 (GQI), 77–79 (GQI), 80–82 (GQI), 83–85 (GQI), 86–88 (GQI), 89–91 (GQI), 92–94 (GQI), and 95–97 (GQA). Residues 11-68 (GQIGPIGQRGQSGQRGQSGQRGQSGQIGQSGQSGQSGQIGQIGQIGQIGQIGQIGQIG) form the Collagen-like domain. The 29 X 3 AA approximate tandem repeats of G-Q-I/R/S stretch occupies residues 11-97 (GQIGPIGQRG…IGQIGQIGQA (87 aa)). The tract at residues 16–49 (IGQRGQSGQRGQSGQRGQSGQIGQSGQSGQSGQI) is disordered.

It localises to the secreted. Functionally, collagen-like protein; part of the subtelomeric hrmA-associated cluster (HAC) containing genes that alter the hyphal surface (such as reduced total chitin or increased beta-glucan exposure) and perturb inter-hyphal interactions within the developing biofilms, resulting in a loss of vertically aligned polarized growing filaments. Consequently, this hypoxia-typic morphotype (called H-MORPH) with altered biofilm architecture leads to increased hypoxia fitness, increased host inflammation, rapid disease progression, and mortality in a murine model of invasive aspergillosis. CgnA is directly involved in the reduction of total surface chitin and the increase of beta-glucan exposure, and mediates the detachment of the extracellular matrix and especially of its component galactosaminogalactan (GAG). This chain is Subtelomeric hrmA-associated cluster protein cgnA, found in Aspergillus fumigatus (strain ATCC MYA-4609 / CBS 101355 / FGSC A1100 / Af293) (Neosartorya fumigata).